The chain runs to 123 residues: MEKKPNKRIKGEYYELMAKRYLETHQLTFIERNFYSKTGELDLIMRDRDSFVFVEVKYRASSNYGSAQEMVTWQKQRKLQRTALFWLMKNGLSVEHTSFRFDVVAIHSQGQDINWIKNAIVEG.

The protein belongs to the UPF0102 family.

This Aliivibrio salmonicida (strain LFI1238) (Vibrio salmonicida (strain LFI1238)) protein is UPF0102 protein VSAL_I2655.